We begin with the raw amino-acid sequence, 624 residues long: Chaperone protein HtpG (624 aa).

Residues 1–336 are a; substrate-binding; it reads MKGQETRGFQ…SNDLPLNVSR (336 aa). Residues 337 to 552 are b; that stretch reads EILQDSTVTR…ADEMSTQMAK (216 aa). The segment at 553 to 624 is c; it reads LFAAAGQSVP…IRRMNQLLVS (72 aa).

It belongs to the heat shock protein 90 family. As to quaternary structure, homodimer.

It is found in the cytoplasm. In terms of biological role, molecular chaperone. Has ATPase activity. The protein is Chaperone protein HtpG of Salmonella paratyphi A (strain ATCC 9150 / SARB42).